Consider the following 1226-residue polypeptide: Polyamine-transporting ATPase 13A3 (1226 aa).

Residues 1-28 (MDKEERKIINQGQEDEMEIYGYNLSRWK) lie on the Cytoplasmic side of the membrane. Residues 29-49 (LAIVSLGVICTGGFLLLLLYW) lie within the membrane without spanning it. The Cytoplasmic portion of the chain corresponds to 50 to 205 (MPEWRVKATC…IAVKVPSVFK (156 aa)). Ser-98 is subject to Phosphoserine. Residues 206 to 226 (LLIKEVLNPFYIFQLFSVILW) traverse the membrane as a helical segment. Over 227–232 (STDEYY) the chain is Lumenal. Residues 233 to 253 (YYALAIVVMSIVSIVSSLYSI) traverse the membrane as a helical segment. Topologically, residues 254–409 (RKQYVMLHDM…KPTDFKLYRD (156 aa)) are cytoplasmic. A helical transmembrane segment spans residues 410 to 430 (AYLFLLCLVAVAGIGFIYTII). Topologically, residues 431–448 (NSILNEVQVGVIIIESLD) are lumenal. A helical transmembrane segment spans residues 449 to 469 (IITITVPPALPAAMTAGIVYA). At 470–940 (QRRLKKIGIF…ALITSFCVFK (471 aa)) the chain is on the cytoplasmic side. The 4-aspartylphosphate intermediate role is filled by Asp-498. 2 residues coordinate Mg(2+): Asp-498 and Thr-500. ATP contacts are provided by residues 498-500 (DKT), Phe-628, Arg-684, and Asp-750. Phosphoserine is present on Ser-817. Position 883 (Asp-883) interacts with Mg(2+). ATP is bound at residue 883-887 (DGAND). A helical transmembrane segment spans residues 941-961 (FMALYSIIQYFSVTLLYSILS). A topological domain (lumenal) is located at residue Asn-962. The helical transmembrane segment at 963–983 (LGDFQFLFIDLAIILVVVFTM) threads the bilayer. Topologically, residues 984 to 999 (SLNPAWKELVAQRPPS) are cytoplasmic. Residues 1000–1020 (GLISGALLFSVLSQIIICIGF) form a helical membrane-spanning segment. Residues 1021-1073 (QSLGFFWVKQQPWYEVWHPKSDACNATGSLLWNSSHLDNETELDEHNIQNYEN) are Lumenal-facing. A helical membrane pass occupies residues 1074–1094 (TTVFFISSFQYLIVAIAFSKG). Over 1095–1105 (KPFRQPCYKNY) the chain is Cytoplasmic. A helical transmembrane segment spans residues 1106-1126 (FFVFSVIFLYVFILFIMLYPV). Topologically, residues 1127–1143 (ASVDQVLQIVCVPYQWR) are lumenal. A helical transmembrane segment spans residues 1144-1164 (VTMLIIVLVNAFVSITVEESV). The Cytoplasmic portion of the chain corresponds to 1165–1226 (DRWRKCCLPW…NGSCQIITIT (62 aa)).

It belongs to the cation transport ATPase (P-type) (TC 3.A.3) family. Type V subfamily.

Its subcellular location is the recycling endosome membrane. The protein resides in the early endosome membrane. It localises to the late endosome membrane. The enzyme catalyses putrescine(out) + ATP + H2O = putrescine(in) + ADP + phosphate + H(+). Its function is as follows. ATP-driven pump involved in endocytosis-dependent polyamine transport. Uses ATP as an energy source to transfer polyamine precursor putrescine from the endosomal compartment to the cytosol. The chain is Polyamine-transporting ATPase 13A3 (ATP13A3) from Macaca fascicularis (Crab-eating macaque).